Here is a 505-residue protein sequence, read N- to C-terminus: 6-phosphofructo-2-kinase/fructose-2,6-bisphosphatase 2 (505 aa).

The tract at residues 1–20 is disordered; it reads MSGASSSEQNNNSYETKTPN. An N-acetylserine modification is found at serine 2. The segment at 2–248 is 6-phosphofructo-2-kinase; that stretch reads SGASSSEQNN…VYYLMNIHVQ (247 aa). Serine 29 carries the post-translational modification Phosphoserine; by PKA. 45–53 contributes to the ATP binding site; it reads GLPARGKTY. 2 residues coordinate beta-D-fructose 6-phosphate: arginine 78 and arginine 102. Aspartate 128 is a catalytic residue. Beta-D-fructose 6-phosphate contacts are provided by threonine 130 and arginine 136. Residue cysteine 158 is part of the active site. 167–172 is a binding site for ATP; it reads NILEVK. Lysine 172, arginine 193, and tyrosine 197 together coordinate beta-D-fructose 6-phosphate. Residues 249 to 505 are fructose-2,6-bisphosphatase; sequence PRTIYLCRHG…RAQDMQEGAD (257 aa). Arginine 256 contacts beta-D-fructose 2,6-bisphosphate. Histidine 257 acts as the Tele-phosphohistidine intermediate in catalysis. Asparagine 263 and glycine 269 together coordinate beta-D-fructose 2,6-bisphosphate. Glutamate 326 serves as the catalytic Proton donor/acceptor. Beta-D-fructose 2,6-bisphosphate contacts are provided by tyrosine 337, arginine 351, lysine 355, tyrosine 366, glutamine 392, and arginine 396. Position 348-351 (348-351) interacts with ATP; it reads FALR. Residues 392 to 396 and tyrosine 428 contribute to the ATP site; that span reads QAVMR. Residues 445-505 form a disordered region; sequence HRDKPTNNFP…RAQDMQEGAD (61 aa). The segment covering 450-476 has biased composition (polar residues); it reads TNNFPKNQTPVRMRRNSFTPLSSSNTI. At serine 466 the chain carries Phosphoserine; by AMPK. 2 positions are modified to phosphothreonine: threonine 468 and threonine 475. Position 483 is a phosphoserine; by BRAF (serine 483). Serine 486 and serine 493 each carry phosphoserine.

This sequence in the C-terminal section; belongs to the phosphoglycerate mutase family. Homodimer. Forms a heterodimer with PFKFB3. Phosphorylation by AMPK stimulates activity. Heart.

The enzyme catalyses beta-D-fructose 2,6-bisphosphate + H2O = beta-D-fructose 6-phosphate + phosphate. The catalysed reaction is beta-D-fructose 6-phosphate + ATP = beta-D-fructose 2,6-bisphosphate + ADP + H(+). Phosphorylation results in the activation of the kinase activity. In terms of biological role, synthesis and degradation of fructose 2,6-bisphosphate. The polypeptide is 6-phosphofructo-2-kinase/fructose-2,6-bisphosphatase 2 (Homo sapiens (Human)).